Reading from the N-terminus, the 1233-residue chain is ATP-dependent helicase/nuclease subunit A (1233 aa).

Residues 3–474 (TKWTEEQKQA…ILLYKNFRSR (472 aa)) form the UvrD-like helicase ATP-binding domain. An ATP-binding site is contributed by 24–31 (AAAGSGKT). A UvrD-like helicase C-terminal domain is found at 518–809 (VTGGAVELHL…RIMSIHKSKG (292 aa)). The disordered stretch occupies residues 533–555 (VEEEVEEKEEEKNEEKDFEEEEE).

This sequence belongs to the helicase family. AddA subfamily. Heterodimer of AddA and AddB/RexB. Requires Mg(2+) as cofactor.

The enzyme catalyses Couples ATP hydrolysis with the unwinding of duplex DNA by translocating in the 3'-5' direction.. It catalyses the reaction ATP + H2O = ADP + phosphate + H(+). The heterodimer acts as both an ATP-dependent DNA helicase and an ATP-dependent, dual-direction single-stranded exonuclease. Recognizes the chi site generating a DNA molecule suitable for the initiation of homologous recombination. The AddA nuclease domain is required for chi fragment generation; this subunit has the helicase and 3' -&gt; 5' nuclease activities. The sequence is that of ATP-dependent helicase/nuclease subunit A from Thermoanaerobacter sp. (strain X514).